We begin with the raw amino-acid sequence, 110 residues long: NADH-quinone oxidoreductase subunit K (110 aa).

3 consecutive transmembrane segments (helical) span residues 13-33, 38-58, and 70-90; these read VTHG…GIII, ILIL…NFLI, and VFVF…LAIV.

It belongs to the complex I subunit 4L family. NDH-1 is composed of 14 different subunits. Subunits NuoA, H, J, K, L, M, N constitute the membrane sector of the complex.

It localises to the cell inner membrane. It carries out the reaction a quinone + NADH + 5 H(+)(in) = a quinol + NAD(+) + 4 H(+)(out). NDH-1 shuttles electrons from NADH, via FMN and iron-sulfur (Fe-S) centers, to quinones in the respiratory chain. The immediate electron acceptor for the enzyme in this species is believed to be ubiquinone. Couples the redox reaction to proton translocation (for every two electrons transferred, four hydrogen ions are translocated across the cytoplasmic membrane), and thus conserves the redox energy in a proton gradient. The chain is NADH-quinone oxidoreductase subunit K from Francisella tularensis subsp. holarctica (strain FTNF002-00 / FTA).